The chain runs to 199 residues: Chaperone protein TorD (199 aa).

Belongs to the TorD/DmsD family. TorD subfamily.

Its subcellular location is the cytoplasm. Functionally, involved in the biogenesis of TorA. Acts on TorA before the insertion of the molybdenum cofactor and, as a result, probably favors a conformation of the apoenzyme that is competent for acquiring the cofactor. The polypeptide is Chaperone protein TorD (Escherichia coli (strain K12 / MC4100 / BW2952)).